Here is a 290-residue protein sequence, read N- to C-terminus: Endonuclease 2 (290 aa).

An N-terminal signal peptide occupies residues 1 to 27 (MANQKGLHVVMMIITVWLLYAAPNIHG). A divalent metal cation contacts are provided by W28 and H33. A substrate-binding site is contributed by 28–33 (WGKEGH). A disulfide bridge links C37 with C68. Residues D72 and H85 each contribute to the a divalent metal cation site. Substrate is bound by residues 72–76 (DRVKF), 85–88 (HYIN), and 94–99 (SYQYNR). 3 disulfide bridges follow: C93–C245, C101–C111, and C226–C232. Residues N118 and Y136 each coordinate substrate. Residue N118 is glycosylated (N-linked (GlcNAc...) asparagine). Residue N137 is glycosylated (N-linked (GlcNAc...) asparagine). Residues H147, D151, H157, H181, and D185 each contribute to the a divalent metal cation site. The substrate binding stretch occupies residues 147–196 (HFMGDIHQPLHVSYASDKGGNTIEVHWYTRKANLHHIWDSNIIETAEADL). N211 carries an N-linked (GlcNAc...) asparagine glycan. The propeptide at 283–290 (ATLNRIFG) is removed in mature form.

It belongs to the nuclease type I family. Monomer. Requires Mn(2+) as cofactor. It depends on Ca(2+) as a cofactor. Zn(2+) is required as a cofactor. N-glycosylation is required for enzymatic stability and activity.

It carries out the reaction Endonucleolytic cleavage to 5'-phosphomononucleotide and 5'-phosphooligonucleotide end-products.. SsDNase activity is inhibited by the divalent cation chelator EDTA and the reducing agent DTT. Divalent metal ions (e.g. Ca(2+), Mg(2+) and Zn(2+)) and DTT represses RNase activity. RNase activity is enhanced by EDTA. Also repressed by vanadate (VO(4)(3-)) and phosphate (PO(4)(3-)) by occupying the active site. In terms of biological role, endonuclease mostly active on RNA and ssDNA, and to a lower extent, on dsDNA. Can cleave mismatch regions in heteroduplex DNA containing single base pair mismatches or insertion/deletion bases. In contradiction with PubMed:22506810, cannot hydrolyze single-stranded DNA and does not cleave mismatches. This is Endonuclease 2 from Arabidopsis thaliana (Mouse-ear cress).